We begin with the raw amino-acid sequence, 734 residues long: Photosystem I P700 chlorophyll a apoprotein A2 (734 aa).

The next 8 helical transmembrane spans lie at 46-69 (IFAS…FHVA), 135-158 (LYTG…LHLQ), 175-199 (LNHH…HVAI), 273-291 (IAHH…GHMY), 330-353 (IHFQ…QHMY), 369-395 (AALY…IFFI), 417-439 (AIIS…LYVH), and 517-535 (FLVH…LILV). [4Fe-4S] cluster contacts are provided by Cys559 and Cys568. 2 helical membrane passes run 575–596 (AFYL…YWHW) and 643–665 (LSVW…MFLI). 3 residues coordinate chlorophyll a: His654, Met662, and Tyr670. Position 671 (Trp671) interacts with phylloquinone. The helical transmembrane segment at 707 to 727 (LVGLAHFSVGYIFTYAAFLIA) threads the bilayer.

Belongs to the PsaA/PsaB family. In terms of assembly, the PsaA/B heterodimer binds the P700 chlorophyll special pair and subsequent electron acceptors. PSI consists of a core antenna complex that captures photons, and an electron transfer chain that converts photonic excitation into a charge separation. The eukaryotic PSI reaction center is composed of at least 11 subunits. The cofactor is P700 is a chlorophyll a/chlorophyll a' dimer, A0 is one or more chlorophyll a, A1 is one or both phylloquinones and FX is a shared 4Fe-4S iron-sulfur center..

The protein localises to the plastid. It is found in the chloroplast thylakoid membrane. It carries out the reaction reduced [plastocyanin] + hnu + oxidized [2Fe-2S]-[ferredoxin] = oxidized [plastocyanin] + reduced [2Fe-2S]-[ferredoxin]. In terms of biological role, psaA and PsaB bind P700, the primary electron donor of photosystem I (PSI), as well as the electron acceptors A0, A1 and FX. PSI is a plastocyanin-ferredoxin oxidoreductase, converting photonic excitation into a charge separation, which transfers an electron from the donor P700 chlorophyll pair to the spectroscopically characterized acceptors A0, A1, FX, FA and FB in turn. Oxidized P700 is reduced on the lumenal side of the thylakoid membrane by plastocyanin. This is Photosystem I P700 chlorophyll a apoprotein A2 from Oryza sativa (Rice).